A 193-amino-acid chain; its full sequence is Holliday junction branch migration complex subunit RuvA (193 aa).

The domain I stretch occupies residues 1 to 64; sequence MIGRIAGTLL…EDAHLLFGFA (64 aa). A domain II region spans residues 65–144; the sequence is TATERNTFRE…DLGHAPGATP (80 aa). A flexible linker region spans residues 145-151; sequence LADSAVD. Residues 151–193 form a domain III region; it reads DILNALLALGYSEKEAAQAIKQVPAGTGVSDGIKLALKALSKG.

This sequence belongs to the RuvA family. Homotetramer. Forms an RuvA(8)-RuvB(12)-Holliday junction (HJ) complex. HJ DNA is sandwiched between 2 RuvA tetramers; dsDNA enters through RuvA and exits via RuvB. An RuvB hexamer assembles on each DNA strand where it exits the tetramer. Each RuvB hexamer is contacted by two RuvA subunits (via domain III) on 2 adjacent RuvB subunits; this complex drives branch migration. In the full resolvosome a probable DNA-RuvA(4)-RuvB(12)-RuvC(2) complex forms which resolves the HJ.

Its subcellular location is the cytoplasm. Its function is as follows. The RuvA-RuvB-RuvC complex processes Holliday junction (HJ) DNA during genetic recombination and DNA repair, while the RuvA-RuvB complex plays an important role in the rescue of blocked DNA replication forks via replication fork reversal (RFR). RuvA specifically binds to HJ cruciform DNA, conferring on it an open structure. The RuvB hexamer acts as an ATP-dependent pump, pulling dsDNA into and through the RuvAB complex. HJ branch migration allows RuvC to scan DNA until it finds its consensus sequence, where it cleaves and resolves the cruciform DNA. In Cupriavidus metallidurans (strain ATCC 43123 / DSM 2839 / NBRC 102507 / CH34) (Ralstonia metallidurans), this protein is Holliday junction branch migration complex subunit RuvA.